The chain runs to 912 residues: Ubiquitin carboxyl-terminal hydrolase 3 (912 aa).

A compositionally biased stretch (basic and acidic residues) spans Met1–Ser11. Disordered regions lie at residues Met1 to Gln30, Ile68 to Ser176, Asn241 to Gly384, and Gly396 to Pro417. Composition is skewed to low complexity over residues Asn82–Ile95, Ser102–His140, and Thr159–Ser176. Basic residues predominate over residues Ala249–Pro259. Over residues Lys260–Ile310 the composition is skewed to basic and acidic residues. The span at Ser335–Ser355 shows a compositional bias: low complexity. Composition is skewed to polar residues over residues Arg361 to Gly384 and Gly396 to Gln406. In terms of domain architecture, USP spans Arg460–Arg911. The active-site Nucleophile is Cys469. Catalysis depends on His861, which acts as the Proton acceptor.

Belongs to the peptidase C19 family. As to quaternary structure, heterotetramer with BRE5; contains two molecules of BRE5 and two molecules of UBP3. Forms a complex composed of CDC48, DOA1, deubiquitinase UBP3 and probably BRE5. Within the complex interacts directly with DOA1 and CDC48 in a BRE5-independent manner.

The catalysed reaction is Thiol-dependent hydrolysis of ester, thioester, amide, peptide and isopeptide bonds formed by the C-terminal Gly of ubiquitin (a 76-residue protein attached to proteins as an intracellular targeting signal).. Functionally, has an ATP-independent isopeptidase activity, cleaving at the C-terminus of the ubiquitin moiety in natural or engineered linear fusion proteins, irrespective of their size or the presence of an N-terminal extension to ubiquitin. Plays a role in regulation of silencing by interacting with SIR4. Also, in conjunction with BRE5, cleaves ubiquitin, leading to the subsequent mono-ubiquitination of SEC23. Required for ribophagy, a process which relocalizes ribosomal particles into the vacuole for degradation in response to starvation. In Saccharomyces cerevisiae (strain ATCC 204508 / S288c) (Baker's yeast), this protein is Ubiquitin carboxyl-terminal hydrolase 3 (UBP3).